Here is a 1239-residue protein sequence, read N- to C-terminus: DNA topoisomerase 2 (1239 aa).

ATP-binding positions include Asn65, Asn96, 124–126 (SSN), 137–144 (GRHGYGAK), and 354–356 (QSK). The region spanning 434–548 (RTLIVTEGDS…SLLQHNPGYI (115 aa)) is the Toprim domain. Mg(2+)-binding residues include Glu440, Asp517, and Asp519. The Topo IIA-type catalytic domain maps to 685-1101 (IPHCVDGLKP…TPVKMWLTDL (417 aa)). The active-site O-(5'-phospho-DNA)-tyrosine intermediate is the Tyr775. Residues 956-965 (ALSQRIYING) form an interaction with DNA region. A disordered region spans residues 1167-1206 (PASKRKPEDTYGGALSSGGSTRNVGKRLTGARGAKKKKVV).

It belongs to the type II topoisomerase family. In terms of assembly, homodimer. Requires Mg(2+) as cofactor. Mn(2+) serves as cofactor. Ca(2+) is required as a cofactor.

The protein localises to the nucleus. Its subcellular location is the mitochondrion matrix. It is found in the kinetoplast. It catalyses the reaction ATP-dependent breakage, passage and rejoining of double-stranded DNA.. In terms of biological role, control of topological states of DNA by transient breakage and subsequent rejoining of DNA strands. Topoisomerase II makes double-strand breaks. This chain is DNA topoisomerase 2 (TOP2), found in Crithidia fasciculata.